We begin with the raw amino-acid sequence, 244 residues long: UPF0173 metal-dependent hydrolase Rcas_3617 (244 aa).

This sequence belongs to the UPF0173 family.

This chain is UPF0173 metal-dependent hydrolase Rcas_3617, found in Roseiflexus castenholzii (strain DSM 13941 / HLO8).